A 76-amino-acid chain; its full sequence is Acyl carrier protein (76 aa).

The Carrier domain maps to 2 to 76 (KDNFTRLQSI…QDVLNYLERN (75 aa)). O-(pantetheine 4'-phosphoryl)serine is present on serine 37.

This sequence belongs to the acyl carrier protein (ACP) family. Post-translationally, 4'-phosphopantetheine is transferred from CoA to a specific serine of apo-ACP by AcpS. This modification is essential for activity because fatty acids are bound in thioester linkage to the sulfhydryl of the prosthetic group.

It localises to the plastid. It is found in the chloroplast. It functions in the pathway lipid metabolism; fatty acid biosynthesis. Its function is as follows. Carrier of the growing fatty acid chain in fatty acid biosynthesis. This chain is Acyl carrier protein, found in Phaeodactylum tricornutum (strain CCAP 1055/1).